Reading from the N-terminus, the 207-residue chain is LPS-assembly lipoprotein LptE (207 aa).

A signal peptide spans Met1 to Gly19. A lipid anchor (N-palmitoyl cysteine) is attached at Cys20. Residue Cys20 is the site of S-diacylglycerol cysteine attachment.

This sequence belongs to the LptE lipoprotein family. Component of the lipopolysaccharide transport and assembly complex. Interacts with LptD.

It is found in the cell outer membrane. Functionally, together with LptD, is involved in the assembly of lipopolysaccharide (LPS) at the surface of the outer membrane. Required for the proper assembly of LptD. Binds LPS and may serve as the LPS recognition site at the outer membrane. In Yersinia enterocolitica serotype O:8 / biotype 1B (strain NCTC 13174 / 8081), this protein is LPS-assembly lipoprotein LptE.